The sequence spans 207 residues: Probable GTP-binding protein EngB (207 aa).

Residues 22–194 (DLPEVAFAGR…LQRLDVALSD (173 aa)) form the EngB-type G domain. Residues 30-37 (GRSNVGKS), 57-61 (GRTQL), 75-78 (DLPG), 142-145 (TKVD), and 173-175 (FSA) each bind GTP. Mg(2+) contacts are provided by Ser-37 and Thr-59.

This sequence belongs to the TRAFAC class TrmE-Era-EngA-EngB-Septin-like GTPase superfamily. EngB GTPase family. Mg(2+) is required as a cofactor.

Necessary for normal cell division and for the maintenance of normal septation. This is Probable GTP-binding protein EngB from Syntrophotalea carbinolica (strain DSM 2380 / NBRC 103641 / GraBd1) (Pelobacter carbinolicus).